Reading from the N-terminus, the 505-residue chain is Pleckstrin homology domain-containing family D member 1 (505 aa).

Residues 28 to 136 (KVQLYGVLWK…WLEMLQESGK (109 aa)) form the PH domain. Residues 146-391 (EAMIKSLEAQ…KVRNKEKEER (246 aa)) adopt a coiled-coil conformation. A disordered region spans residues 264–284 (DKNQPQPLTNQSEQPPATDGL). Positions 267–278 (QPQPLTNQSEQP) are enriched in polar residues. The residue at position 502 (arginine 502) is an Omega-N-methylarginine.

The protein belongs to the PLEKHD1 family.

This is Pleckstrin homology domain-containing family D member 1 (Plekhd1) from Rattus norvegicus (Rat).